Reading from the N-terminus, the 299-residue chain is Tyrosine recombinase XerC (299 aa).

The Core-binding (CB) domain occupies 3–87; sequence PQCQSYLQQF…AIKQWGEFLL (85 aa). The region spanning 108–287 is the Tyr recombinase domain; sequence PLPKNIDVDS…DFQHLAKVYD (180 aa). Catalysis depends on residues Arg147, Lys171, His239, Arg242, and His265. Tyr274 acts as the O-(3'-phospho-DNA)-tyrosine intermediate in catalysis.

Belongs to the 'phage' integrase family. XerC subfamily. As to quaternary structure, forms a cyclic heterotetrameric complex composed of two molecules of XerC and two molecules of XerD.

It is found in the cytoplasm. Functionally, site-specific tyrosine recombinase, which acts by catalyzing the cutting and rejoining of the recombining DNA molecules. The XerC-XerD complex is essential to convert dimers of the bacterial chromosome into monomers to permit their segregation at cell division. It also contributes to the segregational stability of plasmids. The chain is Tyrosine recombinase XerC from Shewanella sp. (strain ANA-3).